Here is a 258-residue protein sequence, read N- to C-terminus: Short-chain dehydrogenase/reductase FrzI (258 aa).

NADP(+) contacts are provided by Ile-21, Asn-41, and Asn-94. Residues Ser-143 and Ser-144 each act as proton donor in the active site. NADP(+) is bound by residues Tyr-157, Lys-161, Val-191, and Thr-193. The active-site Proton acceptor is the Tyr-157. Residue Lys-161 is the Lowers pKa of active site Tyr of the active site.

This sequence belongs to the short-chain dehydrogenases/reductases (SDR) family.

The enzyme catalyses (1S,3S,6S,7S,8R)-7-hydroxy-6-[(4-methoxyphenyl)methyl]-3-(methylamino)-5-azatricyclo[6.3.1.0(1,5)]dodecan-9-one + NADPH + H(+) = (1S,3S,6S,7S,8S,9S)-6-[(4-methoxyphenyl)methyl]-3-(methylamino)-5-azatricyclo[6.3.1.0(1,5)]dodecane-7,9-diol + NADP(+). The protein operates within secondary metabolite biosynthesis. Its function is as follows. Short-chain dehydrogenase/reductase; part of the gene cluster that mediates the biosynthesis of the alkaloid (-)-FR901483, a potent immunosuppressant that shows efficacy in animal models and a probable inhibitor of purine nucleotide biosynthesis by targeting phosphoribosylpyrophosphate amidotransferase (PPAT). Within the pathway, FrzI catalyzes the formation of dephospho-(-)-FR901483 from the aza-tricyclic intermediate produced by FrzH. The biosynthesis of (-)-FR901483 starts with the condensation of two L-tyrosines to yield (S,S)-dityrosyl-piperazine. This process occurs in 3 steps with the non-canonical nonribosomal peptide synthetase FrzA catalyzing the reduction of L-tyrosine into L-tyrosinal, the spontaneous condensation of 2 L-tyrosinal units, and the subsequent reduction by the NmrA-like family domain-containing oxidoreductase FrzB. The cytochrome P450 monooxygenase FrzC then performs coupling between N10 and C1' to morph the piperazine into a 1,4-diazabicyclo[3.2.1]octane spiro-fused to a 2,5-cyclohexadienone. The dienone portion is further reduced to cyclohexanone by the flavin-dependent reductase FrzD. The methyltranserases (MTs) FrzE and FrzF are then involved in the methylation at the C10' amine and the C4 phenolic oxygen, respectively. The order of the two MTs appear to be interchangeable. Cleavage of the C9-N10' bond by the dioxygenase FrzG then leads to formation of a conjugated iminium. In addition to the oxidation of C9, an additional dehydrogenation between C7 and C8 can occur to give a likely shunt product. The next biosynthetic step is the intramolecular aldol condensation catalyzed by the newly identified aldolase FrzH to yield an aza-tricyclic product with the formation of a C9-C3' bond. The short-chain dehydrogenase/reductase FrzI then produces dephospho-(-)-FR901483 that is phosphorylated at C4'-OH into (-)-FR901483 by the phosphotransferase FrzJ. In Cladobotryum sp, this protein is Short-chain dehydrogenase/reductase FrzI.